The primary structure comprises 233 residues: 2-C-methyl-D-erythritol 4-phosphate cytidylyltransferase (233 aa).

It belongs to the IspD/TarI cytidylyltransferase family. IspD subfamily.

The catalysed reaction is 2-C-methyl-D-erythritol 4-phosphate + CTP + H(+) = 4-CDP-2-C-methyl-D-erythritol + diphosphate. The protein operates within isoprenoid biosynthesis; isopentenyl diphosphate biosynthesis via DXP pathway; isopentenyl diphosphate from 1-deoxy-D-xylulose 5-phosphate: step 2/6. Catalyzes the formation of 4-diphosphocytidyl-2-C-methyl-D-erythritol from CTP and 2-C-methyl-D-erythritol 4-phosphate (MEP). The protein is 2-C-methyl-D-erythritol 4-phosphate cytidylyltransferase of Aromatoleum aromaticum (strain DSM 19018 / LMG 30748 / EbN1) (Azoarcus sp. (strain EbN1)).